We begin with the raw amino-acid sequence, 257 residues long: Probable amino-acid ABC transporter ATP-binding protein y4tH (257 aa).

The region spanning 6 to 251 (IVFDKVKKAY…PKEERTREFL (246 aa)) is the ABC transporter domain. 38–45 (GPSGSGKS) lines the ATP pocket.

Belongs to the ABC transporter superfamily.

The protein localises to the cell inner membrane. Its function is as follows. Probably part of a binding-protein-dependent transport system y4tEFGH for an amino acid. Probably responsible for energy coupling to the transport system. This Sinorhizobium fredii (strain NBRC 101917 / NGR234) protein is Probable amino-acid ABC transporter ATP-binding protein y4tH.